The primary structure comprises 766 residues: 1,4-alpha-glucan branching enzyme GlgB (766 aa).

Residue aspartate 431 is the Nucleophile of the active site. Residue glutamate 484 is the Proton donor of the active site.

This sequence belongs to the glycosyl hydrolase 13 family. GlgB subfamily. Monomer.

The catalysed reaction is Transfers a segment of a (1-&gt;4)-alpha-D-glucan chain to a primary hydroxy group in a similar glucan chain.. Its pathway is glycan biosynthesis; glycogen biosynthesis. Its function is as follows. Catalyzes the formation of the alpha-1,6-glucosidic linkages in glycogen by scission of a 1,4-alpha-linked oligosaccharide from growing alpha-1,4-glucan chains and the subsequent attachment of the oligosaccharide to the alpha-1,6 position. This chain is 1,4-alpha-glucan branching enzyme GlgB, found in Thermosynechococcus vestitus (strain NIES-2133 / IAM M-273 / BP-1).